We begin with the raw amino-acid sequence, 295 residues long: Protease HtpX (295 aa).

2 consecutive transmembrane segments (helical) span residues 5 to 25 (VILF…SMRL) and 43 to 63 (ALLI…LAIS). Histidine 148 provides a ligand contact to Zn(2+). The active site involves glutamate 149. Histidine 152 lines the Zn(2+) pocket. Helical transmembrane passes span 159–179 (VTLA…ARII) and 198–218 (FFIT…LIVL). Glutamate 225 contacts Zn(2+).

Belongs to the peptidase M48B family. Requires Zn(2+) as cofactor.

The protein localises to the cell inner membrane. In Nitrosococcus oceani (strain ATCC 19707 / BCRC 17464 / JCM 30415 / NCIMB 11848 / C-107), this protein is Protease HtpX.